Here is an 80-residue protein sequence, read N- to C-terminus: Exodeoxyribonuclease 7 small subunit (80 aa).

It belongs to the XseB family. As to quaternary structure, heterooligomer composed of large and small subunits.

It is found in the cytoplasm. The catalysed reaction is Exonucleolytic cleavage in either 5'- to 3'- or 3'- to 5'-direction to yield nucleoside 5'-phosphates.. Bidirectionally degrades single-stranded DNA into large acid-insoluble oligonucleotides, which are then degraded further into small acid-soluble oligonucleotides. The sequence is that of Exodeoxyribonuclease 7 small subunit from Rickettsia typhi (strain ATCC VR-144 / Wilmington).